Reading from the N-terminus, the 501-residue chain is Zinc-binding lipoprotein AdcA (501 aa).

The signal sequence occupies residues 1 to 18 (MKKISLLLASLCALFLVA). Cys-19 carries N-palmitoyl cysteine lipidation. Cys-19 carries S-diacylglycerol cysteine lipidation. His-63 lines the Zn(2+) pocket. Positions 116-136 (LPGGEEEEGDHDHGEEGHHHE) are disordered. The tract at residues 120-136 (EEEEGDHDHGEEGHHHE) is his-rich loop. Residues 125-136 (DHDHGEEGHHHE) are compositionally biased toward basic and acidic residues. Residues His-140, His-204, and Glu-279 each contribute to the Zn(2+) site.

The protein belongs to the bacterial solute-binding protein 9 family.

It localises to the cell membrane. Its function is as follows. Part of the ATP-binding cassette (ABC) transport system AdcABC involved in zinc import. Binds zinc with high affinity and specificity and delivers it to the membrane permease for translocation into the cytoplasm. The chain is Zinc-binding lipoprotein AdcA (adcA) from Streptococcus pneumoniae serotype 4 (strain ATCC BAA-334 / TIGR4).